We begin with the raw amino-acid sequence, 328 residues long: Ribosomal RNA large subunit methyltransferase F (328 aa).

The interval methionine 1–aspartate 38 is disordered.

Belongs to the methyltransferase superfamily. METTL16/RlmF family.

The protein resides in the cytoplasm. It catalyses the reaction adenosine(1618) in 23S rRNA + S-adenosyl-L-methionine = N(6)-methyladenosine(1618) in 23S rRNA + S-adenosyl-L-homocysteine + H(+). In terms of biological role, specifically methylates the adenine in position 1618 of 23S rRNA. This Pseudomonas syringae pv. tomato (strain ATCC BAA-871 / DC3000) protein is Ribosomal RNA large subunit methyltransferase F.